Here is a 133-residue protein sequence, read N- to C-terminus: Salivary cystatin-L (133 aa).

Positions Met-1–Ala-19 are cleaved as a signal peptide. The Cystatin domain occupies Ala-30 to Glu-117. 2 disulfide bridges follow: Cys-89/Cys-100 and Cys-111/Cys-130.

This sequence belongs to the cystatin family. As to quaternary structure, monomer. Can form homodimers in vitro, but probably not in vivo. Homodimers are predicted to be inactive; dimerization disrupts the interaction with target proteases.

Its subcellular location is the secreted. In terms of biological role, inhibitor of cysteine proteinases. Inhibits host immune responses via its inhibition of host cathepsins. Contributes to the suppression of the host's immune response to tick salivary proteins and is important for successful feeding on hosts. Inhibits differentiation of host dendritic cells. Inhibits proliferation of host T-cells in response to antigen stimulus. Down-regulates TLR2-mediated host responses to infection by B.burgdorferi and the production of the chemokine CCL3 by host dendritic cells. Down-regulates host responses to infection by B.burgdorferi and the production of IFNB1 by host dendritic cells. Down-regulates IL1B production by host mast cells, and this then leads to impaired activation of IL1R1, resulting in decreased IL9 production. Inhibits host inflammatory reactions and recruitment of host neutrophils. Inhibits papain and cathepsin L (CTSL) (in vitro). Inhibits cathepsin S (CTSS) (in vitro). Inhibits CTSV and CTSC, but to a lesser degree (in vitro). This Ixodes scapularis (Black-legged tick) protein is Salivary cystatin-L.